The sequence spans 932 residues: MAAPTKCQLRGRLVLLCSLLGMLWEARASQIRYSVPEETEKGYIVGNISKDLALEPRELAERRVRIVSRGRTQLFSLNPRSGTLVTAGRIDREELCAQSPRCLVNFKVLVEDRVKLYGIEIEVTDINDSAPKFQAESLEVKINEIAVPGARYPLPEAIDPDVGVNSLQSYQLSPNHHFSLNVQTGDNGAINPELVLERALDREEATAHHLVLTASDGGEPRRSSTVRIHVTVLDTNDNAPVFAQRIYRVKVLENVPPGTWLLTATASDLDEGINGKVAYKFWKINEKQSLLFQLNENTGEISTAKSLDYEECSFYEMEIQAEDGGGLKGWTKVLISVEDVNDNRPEVTITSLFSPVREDAPQGTVILLFNAHDRDSGKNGQVVCSIQENLSFTLENSEEDYYRLLTAQILDREKASEYNITVTATDRGTPPLSTEIHITLQVTDINDNPPAFSQASYSVYLPENNARGTSIFSVIAYDPDSNENSRVIYSLAEDTIQGSPLSTYVSINSDTGVLYALCSFDYEQFRDLQMQVTASDSGSPPLSSNVSLRLFVLDQNDNAPEILYPALPTDGSTGVELAPRSAEPGYLVTKVVAVDRDSGQNAWLSYRLFKASEPGLFSVGLHTGEVRTARALLDRDALKQSLVVAVQDHGQPPLSATVTLTVAIADSIPDILADLGSLQIPADLEASDLTLYLVVAVAVVSCVFLTFVITLLALRLRHWHSSHLLRATSDGLAGVPTSHFVGVDGVRAFLQTYSQEFSLTADSRKSHLIFPQPNYADTLISQQSCEKNEPLCVSVDSKFPIEDTPLVPQAPPNTDWRFSQAQRPGTSGSQNGDDTGTWPNNQFDTEMLQAMILASASEAADGSSTLGGGAGTMGLSARYGPQFTLQHVPDYRQNVYIPGSNATLTNAAGKRDGKAPAGGNGNKKKSGKKEKK.

Residues 1 to 28 (MAAPTKCQLRGRLVLLCSLLGMLWEARA) form the signal peptide. Cadherin domains lie at 29–133 (SQIR…APKF), 134–242 (QAES…APVF), 243–347 (AQRI…RPEV), 348–452 (TITS…PPAF), 453–562 (SQAS…APEI), and 570–683 (DGST…IPAD). Over 29–692 (SQIRYSVPEE…DLEASDLTLY (664 aa)) the chain is Extracellular. N47 and N127 each carry an N-linked (GlcNAc...) asparagine glycan. N-linked (GlcNAc...) asparagine glycosylation is found at N389, N419, and N545. Residues 693-713 (LVVAVAVVSCVFLTFVITLLA) traverse the membrane as a helical segment. At 714-932 (LRLRHWHSSH…KKKSGKKEKK (219 aa)) the chain is on the cytoplasmic side. Disordered stretches follow at residues 803 to 841 (DTPL…WPNN) and 902 to 932 (ATLT…KEKK). The segment covering 816–841 (WRFSQAQRPGTSGSQNGDDTGTWPNN) has biased composition (polar residues). A compositionally biased stretch (basic residues) spans 922–932 (NKKKSGKKEKK).

It localises to the cell membrane. Potential calcium-dependent cell-adhesion protein. May be involved in the establishment and maintenance of specific neuronal connections in the brain. This is Protocadherin gamma-A9 (PCDHGA9) from Homo sapiens (Human).